A 250-amino-acid polypeptide reads, in one-letter code: Entry-fusion complex associated protein OPG095 (250 aa).

Gly2 is lipidated: N-myristoyl glycine; by host. A targeting to MV membrane region spans residues 2–12 (GAAASIQTTVN). The Virion surface segment spans residues 2–183 (GAAASIQTTV…IAPKQVAGTG (182 aa)). 3 disulfides stabilise this stretch: Cys34–Cys57, Cys49–Cys136, and Cys116–Cys158. Residues 184 to 204 (VQFYMIVIGVIILAALFMYYA) form a helical membrane-spanning segment. Residues 205-250 (KRMLFTSTNDKIKLILANKENVHWTTYMDTFFRTSPMVIATTDMQN) lie on the Intravirion side of the membrane.

The protein belongs to the orthopoxvirus OPG095 family. As to quaternary structure, component of the entry fusion complex (EFC) composed of OPG053/F9, OPG076/O3, OPG086/G3, OPG094/G9, OPG095/L1, OPG099/L5, OPG107/H2, OPG143/A16, OPG104/J5, OPG147/A21 and OPG155/A28. Except for OPG095/L1 and OPG053/F9, each of the EFC proteins is required for assembly or stability of the complex. Myristoylated. In terms of processing, disulfid bonds are oxidized in the cytoplasm by OPG088 protein. Post-translationally, unglycosylated because produced in viral factories instead of the classic ER -Golgi route.

It localises to the virion membrane. Its function is as follows. Component of the entry fusion complex (EFC), which consists of 11 proteins. During cell infection, this complex mediates entry of the virion core into the host cytoplasm by a two-step mechanism consisting of lipid mixing of the viral and cellular membranes and subsequent pore formation. The protein is Entry-fusion complex associated protein OPG095 (OPG099) of Bos taurus (Bovine).